We begin with the raw amino-acid sequence, 359 residues long: uncharacterized protein (359 aa).

Residues 1 to 15 (MSIVLAIDTATAAVT) form the signal peptide. One can recognise an N-acetyltransferase domain in the interval 212–359 (IVIGTLTPAD…DAYLMRREAQ (148 aa)).

This is an uncharacterized protein from Mycobacterium leprae (strain TN).